The following is a 173-amino-acid chain: Superoxide dismutase [Cu-Zn] (173 aa).

The signal sequence occupies residues 1–19 (MKRFSLAILALVVATGAQA). 3 residues coordinate Cu cation: His-67, His-69, and His-92. The tract at residues 72–113 (GSCQPATKDGKASAAESAGGHLDPQNTGKHEGPEGAGHLGDL) is disordered. An intrachain disulfide couples Cys-74 to Cys-169. Zn(2+) is bound by residues His-92, His-101, His-109, and Asp-112. His-147 provides a ligand contact to Cu cation.

This sequence belongs to the Cu-Zn superoxide dismutase family. As to quaternary structure, monomer. Cu cation is required as a cofactor. Zn(2+) serves as cofactor.

The protein resides in the periplasm. It catalyses the reaction 2 superoxide + 2 H(+) = H2O2 + O2. Functionally, destroys radicals which are normally produced within the cells and which are toxic to biological systems. This is Superoxide dismutase [Cu-Zn] (sodC) from Escherichia coli O157:H7.